Consider the following 299-residue polypeptide: Oxygen-dependent coproporphyrinogen-III oxidase (299 aa).

Ser-92 is a binding site for substrate. 2 residues coordinate a divalent metal cation: His-96 and His-106. His-106 serves as the catalytic Proton donor. Asn-108 to Arg-110 is a binding site for substrate. A divalent metal cation is bound by residues His-145 and His-175. Residues Tyr-240–Glu-275 form an important for dimerization region. Gly-258–Arg-260 provides a ligand contact to substrate.

This sequence belongs to the aerobic coproporphyrinogen-III oxidase family. As to quaternary structure, homodimer. A divalent metal cation serves as cofactor.

The protein resides in the cytoplasm. It catalyses the reaction coproporphyrinogen III + O2 + 2 H(+) = protoporphyrinogen IX + 2 CO2 + 2 H2O. It functions in the pathway porphyrin-containing compound metabolism; protoporphyrin-IX biosynthesis; protoporphyrinogen-IX from coproporphyrinogen-III (O2 route): step 1/1. Involved in the heme biosynthesis. Catalyzes the aerobic oxidative decarboxylation of propionate groups of rings A and B of coproporphyrinogen-III to yield the vinyl groups in protoporphyrinogen-IX. This is Oxygen-dependent coproporphyrinogen-III oxidase from Salmonella dublin (strain CT_02021853).